We begin with the raw amino-acid sequence, 327 residues long: Malate dehydrogenase (327 aa).

Gly12–Ala18 is an NAD(+) binding site. Residues Arg93 and Arg99 each coordinate substrate. Residues Asn106, Gln113, and Val130–Asn132 contribute to the NAD(+) site. Substrate is bound by residues Asn132 and Arg163. The active-site Proton acceptor is His188.

The protein belongs to the LDH/MDH superfamily. MDH type 2 family.

It carries out the reaction (S)-malate + NAD(+) = oxaloacetate + NADH + H(+). Its function is as follows. Catalyzes the reversible oxidation of malate to oxaloacetate. This chain is Malate dehydrogenase, found in Burkholderia mallei (strain NCTC 10247).